Reading from the N-terminus, the 513-residue chain is Probable G-protein coupled receptor Mth-like 9 (513 aa).

Residues 1–19 form the signal peptide; the sequence is MVSPLIILLIIWLSVGAKS. Residues 20–207 are Extracellular-facing; it reads VEIASINHPC…NCERFQTGYR (188 aa). 4 disulfides stabilise this stretch: Cys-29/Cys-82, Cys-84/Cys-89, Cys-93/Cys-181, and Cys-94/Cys-107. The N-linked (GlcNAc...) asparagine glycan is linked to Asn-36. Asn-106, Asn-125, and Asn-165 each carry an N-linked (GlcNAc...) asparagine glycan. A helical transmembrane segment spans residues 208 to 228; that stretch reads VWIYAICSIIAIIINIFILSL. At 229 to 242 the chain is on the cytoplasmic side; it reads LGSVRDARKSHYGQ. The helical transmembrane segment at 243–263 threads the bilayer; that stretch reads LIIYYLLSMIVGYSLLVYLAL. Over 264 to 276 the chain is Extracellular; the sequence is KNPMKLSHVACRN. A helical transmembrane segment spans residues 277–297; that stretch reads IGFLAYFCIMLSFVFLAICSL. Residues 298–314 are Cytoplasmic-facing; it reads DFLLKFKQKAVRSSVRR. Residues 315-335 form a helical membrane-spanning segment; sequence LSLALAVLAVIGLRFLVSLAQ. Residues 336-360 lie on the Extracellular side of the membrane; sequence DSKLPKHFKPGMGEDYCWFDVRTWG. The helical transmembrane segment at 361-381 threads the bilayer; it reads ILIYYYGPIALLLIFSIVCCL. Residues 382–403 are Cytoplasmic-facing; that stretch reads KAYFSIYELPPDTQYILGTQLK. Residues 404–424 traverse the membrane as a helical segment; it reads IVKTHFYAFSAYIVGVFAVWI. Topologically, residues 425 to 438 are extracellular; it reads REIVVYIMARVREH. Residues 439 to 459 form a helical membrane-spanning segment; the sequence is FFIIDFWSGICILGLAIAGFI. Over 460–513 the chain is Cytoplasmic; sequence LLLGKNLHVKSWWAINVESSQTDLSIINARVYKFDEKGDLKSSDSPYKPTVTSL.

This sequence belongs to the G-protein coupled receptor 2 family. Mth subfamily.

Its subcellular location is the cell membrane. The protein is Probable G-protein coupled receptor Mth-like 9 (mthl9) of Drosophila melanogaster (Fruit fly).